The chain runs to 301 residues: UDP-N-acetylenolpyruvoylglucosamine reductase (301 aa).

The region spanning 29–195 is the FAD-binding PCMH-type domain; the sequence is KIGGPADVFV…VEAIFSLTRG (167 aa). Arginine 174 is a catalytic residue. Serine 224 functions as the Proton donor in the catalytic mechanism. Residue glutamate 294 is part of the active site.

Belongs to the MurB family. FAD serves as cofactor.

The protein resides in the cytoplasm. The catalysed reaction is UDP-N-acetyl-alpha-D-muramate + NADP(+) = UDP-N-acetyl-3-O-(1-carboxyvinyl)-alpha-D-glucosamine + NADPH + H(+). Its pathway is cell wall biogenesis; peptidoglycan biosynthesis. Functionally, cell wall formation. This is UDP-N-acetylenolpyruvoylglucosamine reductase from Halalkalibacterium halodurans (strain ATCC BAA-125 / DSM 18197 / FERM 7344 / JCM 9153 / C-125) (Bacillus halodurans).